A 984-amino-acid polypeptide reads, in one-letter code: Serine/threonine-protein kinase Nek9 (984 aa).

Residue S2 is modified to N-acetylserine. Residues S2, S13, S16, and S20 each carry the phosphoserine modification. Residues 14–43 (INSDFGSESGGGGDSGPGPSAVPGPRAGGG) are disordered. Y52 carries the phosphotyrosine modification. The Protein kinase domain occupies 52–308 (YIPIRVLGRG…ADALLDLPLL (257 aa)). 58–66 (LGRGAFGEA) is an ATP binding site. S76 carries the post-translational modification Phosphoserine. K81 is a binding site for ATP. D176 acts as the Proton acceptor in catalysis. Residue T210 is modified to Phosphothreonine; by autocatalysis. T254 carries the post-translational modification Phosphothreonine. Position 331 is a phosphoserine (S331). A Phosphothreonine modification is found at T333. 6 RCC1 repeats span residues 388–444 (KELY…VTDE), 445–498 (GQLY…LTRN), 499–550 (KEVY…LTQS), 551–615 (GKVL…IDER), 616–668 (GRLL…ATDD), and 669–726 (NHIF…IVEK). Positions 732–896 (TIRSNSSGLS…GKALTSAACA (165 aa)) are interaction with NEK6. Phosphoserine is present on S741. The tract at residues 744 to 790 (TVVQSSSPGGGIGGGGGGGGGGGGEEEDSQQESETPDPSGGFRGTME) is disordered. A compositionally biased stretch (gly residues) spans 751-766 (PGGGIGGGGGGGGGGG). The span at 767–778 (GEEEDSQQESET) shows a compositional bias: acidic residues. S808 and S839 each carry phosphoserine. A Phosphothreonine modification is found at T891. Residues 896–945 (ACSALQVEVDRLQALVLKCLEEQQKLQQENLQMFTQLQKLNKKLEGGQQV) adopt a coiled-coil conformation. The interval 940–984 (EGGQQVGMHSRGTQTAKEEMEMDPKPDLDSESWCLLGTDSCRPSL) is disordered. S949 is subject to Phosphoserine. Over residues 955 to 967 (AKEEMEMDPKPDL) the composition is skewed to basic and acidic residues. S983 carries the phosphoserine modification.

This sequence belongs to the protein kinase superfamily. NEK Ser/Thr protein kinase family. NIMA subfamily. As to quaternary structure, homodimer; homodimerization is required to activate NEK7. Binds to Ran GTPase. Has a greater affinity for Ran-GDP over Ran-GTP. Interacts with SSRP1 and SUPT16H, the 2 subunits of the FACT complex. Interacts with DYNLL1; phosphorylation at Ser-949 strongly reduces DYNLL1 binding. Mg(2+) serves as cofactor. Post-translationally, autophosphorylated on serine and threonine residues. When complexed with FACT, exhibits markedly elevated phosphorylation on Thr-210. During mitosis, not phosphorylated on Thr-210. Phosphorylated by CDK1 in vitro.

The protein resides in the cytoplasm. It is found in the nucleus. It carries out the reaction L-seryl-[protein] + ATP = O-phospho-L-seryl-[protein] + ADP + H(+). The catalysed reaction is L-threonyl-[protein] + ATP = O-phospho-L-threonyl-[protein] + ADP + H(+). Activated during mitosis by intramolecular autophosphorylation. Activity and autophosphorylation is activated by manganese &gt;&gt; magnesium ions. It is not cell-cycle regulated but activity is higher in G0-arrested cells. Functionally, pleiotropic regulator of mitotic progression, participating in the control of spindle dynamics and chromosome separation. Phosphorylates different histones, myelin basic protein, beta-casein, and BICD2. Phosphorylates histone H3 on serine and threonine residues and beta-casein on serine residues. Important for G1/S transition and S phase progression. Phosphorylates NEK6 and NEK7 and stimulates their activity by releasing the autoinhibitory functions of Tyr-108 and Tyr-97 respectively. In Mus musculus (Mouse), this protein is Serine/threonine-protein kinase Nek9.